Here is a 285-residue protein sequence, read N- to C-terminus: HTH-type transcriptional regulator MurR (285 aa).

Residues 1 to 77 (MLYLTKIRNA…MALIGEYSAS (77 aa)) enclose the HTH rpiR-type domain. The segment at residues 37–56 (SRKMAKQLGISQSSIVKFAQ) is a DNA-binding region (H-T-H motif). Positions 128-268 (IIEVISKAPF…FVGLVQLNDV (141 aa)) constitute an SIS domain.

As to quaternary structure, homotetramer.

It functions in the pathway amino-sugar metabolism; N-acetylmuramate degradation [regulation]. Represses the expression of the murPQ operon involved in the uptake and degradation of N-acetylmuramic acid (MurNAc). Binds to two adjacent inverted repeats within the operator region. MurNAc 6-phosphate, the substrate of MurQ, is the specific inducer that weakens binding of MurR to the operator. The polypeptide is HTH-type transcriptional regulator MurR (Escherichia coli O9:H4 (strain HS)).